Reading from the N-terminus, the 587-residue chain is Mitochondrial ribonuclease P catalytic subunit (587 aa).

A mitochondrion-targeting transit peptide spans 1–46; it reads MTFYLSGFRSFLKLWKSNPYFELGPATSSASFFLGVHCVIGNQQRW. Residues 94 to 114 form a disordered region; it reads KRSHLSGNPQNQGHTLPVKST. The segment covering 98–114 has biased composition (polar residues); it reads LSGNPQNQGHTLPVKST. In terms of domain architecture, PRORP spans 342 to 578; that stretch reads IQKSGQCSSC…SCEVPTKWLC (237 aa). Zn(2+) contacts are provided by Cys-348 and Cys-351. Residues Asp-409, Asp-478, Asp-479, and Asp-499 each coordinate Mg(2+). His-557 and Cys-578 together coordinate Zn(2+).

Belongs to the PPR family. P subfamily. In terms of assembly, catalytic component of mitochondrial ribonuclease P, a complex composed of TRMT10C/MRPP1, HSD17B10/MRPP2 and PRORP/MRPP3. It depends on Mg(2+) as a cofactor. The cofactor is Mn(2+). Degraded by LONP1 following mitochondrial unfolded protein response, probably leading to inhibit translation in mitochondrion.

It is found in the mitochondrion. The catalysed reaction is Endonucleolytic cleavage of RNA, removing 5'-extranucleotides from tRNA precursor.. In terms of biological role, catalytic ribonuclease component of mitochondrial ribonuclease P, a complex composed of TRMT10C/MRPP1, HSD17B10/MRPP2 and PRORP/MRPP3, which cleaves tRNA molecules in their 5'-ends. The presence of TRMT10C/MRPP1, HSD17B10/MRPP2 is required to catalyze tRNA molecules in their 5'-ends. The polypeptide is Mitochondrial ribonuclease P catalytic subunit (Prorp) (Rattus norvegicus (Rat)).